The chain runs to 307 residues: Ribosomal RNA small subunit methyltransferase H (307 aa).

S-adenosyl-L-methionine-binding positions include 33–35 (GGY), Asp-51, Phe-82, Asp-96, and Gln-103.

Belongs to the methyltransferase superfamily. RsmH family.

The protein localises to the cytoplasm. The enzyme catalyses cytidine(1402) in 16S rRNA + S-adenosyl-L-methionine = N(4)-methylcytidine(1402) in 16S rRNA + S-adenosyl-L-homocysteine + H(+). Functionally, specifically methylates the N4 position of cytidine in position 1402 (C1402) of 16S rRNA. In Rickettsia africae (strain ESF-5), this protein is Ribosomal RNA small subunit methyltransferase H.